We begin with the raw amino-acid sequence, 555 residues long: CTP synthase (555 aa).

Residues 1-265 (MTRYIFITGG…GNRVCEKLNI (265 aa)) are amidoligase domain. Position 13 (serine 13) interacts with CTP. Serine 13 contributes to the UTP binding site. ATP contacts are provided by residues 14 to 19 (SLGKGI) and aspartate 71. Mg(2+)-binding residues include aspartate 71 and glutamate 139. CTP contacts are provided by residues 146–148 (DIE), 186–191 (KTKPTQ), and lysine 222. UTP contacts are provided by residues 186-191 (KTKPTQ) and lysine 222. In terms of domain architecture, Glutamine amidotransferase type-1 spans 290–541 (TVAVVGKYVD…IKAGLAAKEA (252 aa)). Glycine 351 contributes to the L-glutamine binding site. Cysteine 378 (nucleophile; for glutamine hydrolysis) is an active-site residue. Residues 379–382 (LGMQ), glutamate 402, and arginine 469 contribute to the L-glutamine site. Active-site residues include histidine 514 and glutamate 516.

It belongs to the CTP synthase family. In terms of assembly, homotetramer.

The enzyme catalyses UTP + L-glutamine + ATP + H2O = CTP + L-glutamate + ADP + phosphate + 2 H(+). It catalyses the reaction L-glutamine + H2O = L-glutamate + NH4(+). The catalysed reaction is UTP + NH4(+) + ATP = CTP + ADP + phosphate + 2 H(+). It functions in the pathway pyrimidine metabolism; CTP biosynthesis via de novo pathway; CTP from UDP: step 2/2. Its activity is regulated as follows. Allosterically activated by GTP, when glutamine is the substrate; GTP has no effect on the reaction when ammonia is the substrate. The allosteric effector GTP functions by stabilizing the protein conformation that binds the tetrahedral intermediate(s) formed during glutamine hydrolysis. Inhibited by the product CTP, via allosteric rather than competitive inhibition. Its function is as follows. Catalyzes the ATP-dependent amination of UTP to CTP with either L-glutamine or ammonia as the source of nitrogen. Regulates intracellular CTP levels through interactions with the four ribonucleotide triphosphates. This is CTP synthase from Coxiella burnetii (strain RSA 493 / Nine Mile phase I).